A 444-amino-acid polypeptide reads, in one-letter code: Maintenance of mitochondrial morphology protein 1 (444 aa).

The Lumenal portion of the chain corresponds to 1–110 (MNNLDNLAGN…SFSGWSFIEG (110 aa)). The chain crosses the membrane as a helical span at residues 111-131 (FIIGQFSVIIVLIFFIKFFVF). The Cytoplasmic portion of the chain corresponds to 132–444 (SDGSSSNSSN…TDDVPLSKAE (313 aa)). Residues 207-419 (PSESLDWFNV…EPRFQCIRLP (213 aa)) form the SMP-LTD domain.

This sequence belongs to the MMM1 family. Homodimer. Component of the ER-mitochondria encounter structure (ERMES) or MDM complex, composed of MMM1, MDM10, MDM12 and MDM34. An MMM1 homodimer associates with one molecule of MDM12 on each side in a pairwise head-to-tail manner, and the SMP-LTD domains of MMM1 and MDM12 generate a continuous hydrophobic tunnel for phospholipid trafficking.

The protein localises to the endoplasmic reticulum membrane. In terms of biological role, component of the ERMES/MDM complex, which serves as a molecular tether to connect the endoplasmic reticulum (ER) and mitochondria. Components of this complex are involved in the control of mitochondrial shape and protein biogenesis, and function in nonvesicular lipid trafficking between the ER and mitochondria. The MDM12-MMM1 subcomplex functions in the major beta-barrel assembly pathway that is responsible for biogenesis of all outer membrane beta-barrel proteins, and acts in a late step after the SAM complex. The MDM10-MDM12-MMM1 subcomplex further acts in the TOM40-specific pathway after the action of the MDM12-MMM1 complex. Essential for establishing and maintaining the structure of mitochondria and maintenance of mtDNA nucleoids. The polypeptide is Maintenance of mitochondrial morphology protein 1 (Vanderwaltozyma polyspora (strain ATCC 22028 / DSM 70294 / BCRC 21397 / CBS 2163 / NBRC 10782 / NRRL Y-8283 / UCD 57-17) (Kluyveromyces polysporus)).